The sequence spans 91 residues: Acylphosphatase (91 aa).

One can recognise an Acylphosphatase-like domain in the interval 3-91; sequence TVTMKVTGLV…EKFTRFSVVY (89 aa). Active-site residues include arginine 18 and asparagine 36.

This sequence belongs to the acylphosphatase family.

It catalyses the reaction an acyl phosphate + H2O = a carboxylate + phosphate + H(+). This chain is Acylphosphatase (acyP), found in Lactobacillus gasseri (strain ATCC 33323 / DSM 20243 / BCRC 14619 / CIP 102991 / JCM 1131 / KCTC 3163 / NCIMB 11718 / NCTC 13722 / AM63).